The chain runs to 142 residues: Probable transport accessory protein MmpS5 (142 aa).

A helical transmembrane segment spans residues 7–26; the sequence is RAWIPLLILVVVAIAGFTVQ.

Belongs to the MmpS family.

It localises to the cell membrane. The polypeptide is Probable transport accessory protein MmpS5 (mmpS5) (Mycobacterium bovis (strain ATCC BAA-935 / AF2122/97)).